A 266-amino-acid chain; its full sequence is Sesquipedalian-1 (266 aa).

Residues 17–113 (PVDNAGFLYK…WVKALSRASF (97 aa)) form the PH domain. Residues 165–184 (QPSVAPQRPPPLPPRRRASA) are disordered. Serine 183 is modified (phosphoserine). A F&amp;H motif is present at residues 191–203 (SFAQLHARYGLEV).

This sequence belongs to the sesquipedalian family. In terms of assembly, forms homodimers and heterodimers with PHETA2. Interacts with OCRL and INPP5B. Interaction with OCRL may be important for endosomal morphology and function.

It is found in the early endosome. The protein resides in the recycling endosome. Its subcellular location is the golgi apparatus. It localises to the trans-Golgi network. The protein localises to the cytoplasmic vesicle. It is found in the clathrin-coated vesicle. Plays a role in endocytic trafficking. Required for receptor recycling from endosomes, both to the trans-Golgi network and the plasma membrane. In Mus musculus (Mouse), this protein is Sesquipedalian-1.